The primary structure comprises 515 residues: Probable coatomer subunit delta (515 aa).

The span at 161-180 shows a compositional bias: basic and acidic residues; that stretch reads AKQAMAEKAKELKRAQKEAL. Residues 161 to 231 form a disordered region; sequence AKQAMAEKAK…GGKALKLGGK (71 aa). Residues 187 to 198 show a composition bias toward low complexity; the sequence is SYQSSTGISSSS. Residues 276 to 515 enclose the MHD domain; the sequence is REVVHVRTEE…TFNSENFEIV (240 aa).

It belongs to the adaptor complexes medium subunit family. Delta-COP subfamily. Oligomeric complex that consists of at least the alpha, beta, beta', gamma, delta, epsilon and zeta subunits.

Its subcellular location is the cytoplasm. It localises to the golgi apparatus membrane. It is found in the cytoplasmic vesicle. The protein localises to the COPI-coated vesicle membrane. Functionally, the coatomer is a cytosolic protein complex that binds to dilysine motifs and reversibly associates with Golgi non-clathrin-coated vesicles, which further mediate biosynthetic protein transport from the ER, via the Golgi up to the trans Golgi network. Coatomer complex is required for budding from Golgi membranes, and is essential for the retrograde Golgi-to-ER transport of dilysine-tagged proteins. This chain is Probable coatomer subunit delta, found in Caenorhabditis elegans.